We begin with the raw amino-acid sequence, 319 residues long: MESFNVVETLQPAERALFWVGALITASLALYVVYKTITGFRIWVLGNGDLLSPKLGKWAVVTGATDGIGKSYAEELARRGFSMMLISRSQEKLDDVAKSLESTYKVETKTIAVDFSQIDVYPKIEKGLAGLEIGILVNNVGISYSYPEFFLHIPDLENFITTMINVNITSVCQMTRLVLPRMEARAKGVILNISSASGMFPVPLLTIYSSTKAFVDFFSRGLQTEYKCKGIIIQSVLPFFVATKMTKIRKPTLDKPTPERYVAAELNTVGLQDQTNGYFPHAVMGWVTTILAPIDLVLNLGLRMNKAQRGGYLRRRKLR.

The chain crosses the membrane as a helical span at residues 17–37 (LFWVGALITASLALYVVYKTI). 56 to 85 (GKWAVVTGATDGIGKSYAEELARRGFSMML) lines the NADP(+) pocket. 2 consecutive transmembrane segments (helical) span residues 188–208 (GVILNISSASGMFPVPLLTIY) and 282–302 (AVMGWVTTILAPIDLVLNLGL). Residue Ser195 coordinates substrate. Tyr208 functions as the Proton acceptor in the catalytic mechanism.

Belongs to the short-chain dehydrogenases/reductases (SDR) family. 17-beta-HSD 3 subfamily.

Its subcellular location is the endoplasmic reticulum membrane. The catalysed reaction is a very-long-chain (3R)-3-hydroxyacyl-CoA + NADP(+) = a very-long-chain 3-oxoacyl-CoA + NADPH + H(+). It carries out the reaction 17beta-estradiol + NAD(+) = estrone + NADH + H(+). It catalyses the reaction 17beta-estradiol + NADP(+) = estrone + NADPH + H(+). The protein operates within lipid metabolism; fatty acid biosynthesis. It participates in steroid biosynthesis; estrogen biosynthesis. Catalyzes the second of the four reactions of the long-chain fatty acids elongation cycle. This endoplasmic reticulum-bound enzymatic process, allows the addition of two carbons to the chain of long- and very long-chain fatty acids/VLCFAs per cycle. This enzyme has a 3-ketoacyl-CoA reductase activity, reducing 3-ketoacyl-CoA to 3-hydroxyacyl-CoA, within each cycle of fatty acid elongation. Thereby, it may participate in the production of VLCFAs of different chain lengths that are involved in multiple biological processes as precursors of membrane lipids and lipid mediators. May also catalyze the transformation of estrone (E1) into estradiol (E2) and play a role in estrogen formation. The chain is Very-long-chain 3-oxoacyl-CoA reductase-A (hsd17b12a) from Danio rerio (Zebrafish).